The primary structure comprises 257 residues: 3-alpha-hydroxysteroid dehydrogenase/carbonyl reductase (257 aa).

Residues 8–13 (GCATGI), D32, 41–42 (DL), and G71 each bind NAD(+). Position 114 (S114) interacts with substrate. 2 residues coordinate NAD(+): Y155 and K159. Y155 functions as the Proton acceptor in the catalytic mechanism.

Belongs to the short-chain dehydrogenases/reductases (SDR) family. Homodimer.

It is found in the cytoplasm. The catalysed reaction is a 3alpha-hydroxysteroid + NADP(+) = a 3-oxosteroid + NADPH + H(+). The enzyme catalyses a 3alpha-hydroxysteroid + NAD(+) = a 3-oxosteroid + NADH + H(+). Functionally, catalyzes the reversible interconversion of hydroxy and oxo groups at position 3 of the steroid nucleus. Along with the 3 alpha-hydroxysteroid dehydrogenase and 3-oxo-reductase activities towards a variety of cis or trans fused A/B ring steroids, it also reduces several xenobiotic carbonyl compounds, including a metyrapone-based class of insecticides, to the respective alcohol metabolites. No detectable activity on testosterone, progesterone or 3-oxo-desogestrel. The chain is 3-alpha-hydroxysteroid dehydrogenase/carbonyl reductase (hsdA) from Comamonas testosteroni (Pseudomonas testosteroni).